The primary structure comprises 84 residues: Putative membrane protein insertion efficiency factor (84 aa).

It belongs to the UPF0161 family.

The protein resides in the cell inner membrane. Its function is as follows. Could be involved in insertion of integral membrane proteins into the membrane. The polypeptide is Putative membrane protein insertion efficiency factor (Shewanella amazonensis (strain ATCC BAA-1098 / SB2B)).